The following is a 44-amino-acid chain: MFKIFRTKWFRSAPVLATLWLSSTAVILIGVNSYFPDYLFMPMS.

The helical transmembrane segment at 13-35 (APVLATLWLSSTAVILIGVNSYF) threads the bilayer.

Belongs to the PsaJ family.

It is found in the cellular thylakoid membrane. May help in the organization of the PsaE and PsaF subunits. In Prochlorococcus marinus (strain NATL2A), this protein is Photosystem I reaction center subunit IX 2 (psaJ2).